The primary structure comprises 433 residues: Ribonuclease T2-like (433 aa).

Disulfide bonds link Cys28–Cys47, Cys36–Cys95, Cys46–Cys171, and Cys103–Cys163. N-linked (GlcNAc...) asparagine glycosylation is found at Asn38 and Asn71. Residues His88, Glu156, and His160 contribute to the active site. N-linked (GlcNAc...) asparagine glycans are attached at residues Asn221 and Asn263. A disulfide bridge connects residues Cys247 and Cys283.

Belongs to the RNase T2 family.

The protein localises to the vacuole lumen. The protein resides in the cytoplasm. The catalysed reaction is a ribonucleotidyl-ribonucleotide-RNA + H2O = a 3'-end 3'-phospho-ribonucleotide-RNA + a 5'-end dephospho-ribonucleoside-RNA + H(+). Functionally, rnase which modulates cell survival under stress conditions. Released from the vacuole to the cytoplasm during stress to promote tRNA and rRNA cleavage and to activate separately a downstream pathway that promotes cell death. Involved in cell size, vacuolar morphology and growth at high temperatures and high salt concentration. This Candida glabrata (strain ATCC 2001 / BCRC 20586 / JCM 3761 / NBRC 0622 / NRRL Y-65 / CBS 138) (Yeast) protein is Ribonuclease T2-like (RNY1).